Consider the following 307-residue polypeptide: MANPLYKKNILSIADLSRTDLELVVQTASQLKQSPRHDLLQHKVIASCFFEASTRTRLSFETAVHRLGGSVIGFADAGNTSLAKKGETLADSVRVITSYTDAFVIRHPQEGAARLSAEFSSVPVINAGDGSNQHPTQTLLDLFSIYETQGTLDGLKLAFVGDLKYGRTVHSLAQALSLFGARFYFISPEALAMPDYICEELTEKGIEFSFHDTIEEVMPELDILYMTRVQKERFEESEYRHIAAKFVLSADELKTAKPNMKILHPLPRVDEIHTDVDDTNHAYYFQQAGNGVYARQALLALVLNEEV.

Carbamoyl phosphate contacts are provided by R55 and T56. K85 lines the L-aspartate pocket. Residues R106, H134, and Q137 each coordinate carbamoyl phosphate. The L-aspartate site is built by R167 and R228. Positions 266 and 267 each coordinate carbamoyl phosphate.

Belongs to the aspartate/ornithine carbamoyltransferase superfamily. ATCase family. As to quaternary structure, heterododecamer (2C3:3R2) of six catalytic PyrB chains organized as two trimers (C3), and six regulatory PyrI chains organized as three dimers (R2).

The catalysed reaction is carbamoyl phosphate + L-aspartate = N-carbamoyl-L-aspartate + phosphate + H(+). Its pathway is pyrimidine metabolism; UMP biosynthesis via de novo pathway; (S)-dihydroorotate from bicarbonate: step 2/3. Functionally, catalyzes the condensation of carbamoyl phosphate and aspartate to form carbamoyl aspartate and inorganic phosphate, the committed step in the de novo pyrimidine nucleotide biosynthesis pathway. The chain is Aspartate carbamoyltransferase catalytic subunit from Tolumonas auensis (strain DSM 9187 / NBRC 110442 / TA 4).